The primary structure comprises 516 residues: Flavonoid 3',5'-hydroxylase (516 aa).

Cys453 is a heme binding site.

The protein belongs to the cytochrome P450 family. The cofactor is heme.

It catalyses the reaction a 3',5'-unsubstituted flavanone + 2 reduced [NADPH--hemoprotein reductase] + 2 O2 = a 3',5'-dihydroxyflavanone + 2 oxidized [NADPH--hemoprotein reductase] + 2 H2O + 2 H(+). Its pathway is pigment biosynthesis; anthocyanin biosynthesis. In terms of biological role, catalyzes the 3'5'-hydroxylation of naringenin and eriodictyol to form 5,7,3,'4',5'-pentahydroxyflavanone and 3',5'-hydroxylation of dihydrokaempferol and dihydroquercetin to form dihydromyricetin. This chain is Flavonoid 3',5'-hydroxylase (CYP75A4), found in Gentiana triflora (Clustered gentian).